Here is a 346-residue protein sequence, read N- to C-terminus: Tyrosine--tRNA ligase (346 aa).

Positions P47–A56 match the 'HIGH' region motif. A 'KMSKS' region motif is present at residues K230 to S234. K233 serves as a coordination point for ATP.

This sequence belongs to the class-I aminoacyl-tRNA synthetase family. Homodimer.

It carries out the reaction tRNA(Tyr) + L-tyrosine + ATP = L-tyrosyl-tRNA(Tyr) + AMP + diphosphate + H(+). Its function is as follows. Catalyzes the attachment of tyrosine to tRNA(Tyr) in a two-step reaction: tyrosine is first activated by ATP to form Tyr-AMP and then transferred to the acceptor end of tRNA(Tyr). The sequence is that of Tyrosine--tRNA ligase (YARS) from Acanthamoeba polyphaga (Amoeba).